The primary structure comprises 271 residues: Metal-staphylopine import system ATP-binding protein CntD (271 aa).

An ABC transporter domain is found at 6-251 (VKHLTITDTW…PEHVYTKYLL (246 aa)). An ATP-binding site is contributed by 38-45 (GESGSGKS).

This sequence belongs to the ABC transporter superfamily. The complex is composed of two ATP-binding proteins (CntD and CntF), two transmembrane proteins (CntB and CntC) and a solute-binding protein (CntA).

The protein resides in the cell membrane. Nickel/cobalt import is reduced in the presence of zinc. Its function is as follows. Part of the ABC transporter complex CntABCDF (Opp1) involved in the uptake of metal in complex with the metallophore staphylopine (StP). Involved in the import of divalent metals ions such as nickel, cobalt and zinc. Probably responsible for energy coupling to the transport system. Plays a major role in nickel/cobalt import in zinc-depleted conditions. Contributes to virulence. Required for full urease activity in vitro. This is Metal-staphylopine import system ATP-binding protein CntD from Staphylococcus aureus (strain NCTC 8325 / PS 47).